The sequence spans 147 residues: Hemoglobin subunit beta (147 aa).

Val2 carries the post-translational modification N-acetylvaline. The Globin domain maps to 3–147 (HLTGDEKAAV…VANALAHKYH (145 aa)). The residue at position 13 (Thr13) is a Phosphothreonine. Position 45 is a phosphoserine (Ser45). Lys60 carries the N6-acetyllysine modification. Heme b is bound at residue His64. The residue at position 83 (Lys83) is an N6-acetyllysine. Residue His93 coordinates heme b. At Cys94 the chain carries S-nitrosocysteine. N6-acetyllysine is present on Lys145.

The protein belongs to the globin family. As to quaternary structure, heterotetramer of two alpha chains and two beta chains. Red blood cells.

In terms of biological role, involved in oxygen transport from the lung to the various peripheral tissues. This Alouatta belzebul (Red-handed howler monkey) protein is Hemoglobin subunit beta (HBB).